Reading from the N-terminus, the 525-residue chain is GMP synthase [glutamine-hydrolyzing] (525 aa).

The Glutamine amidotransferase type-1 domain occupies 9–207 (RILILDFGSQ…VSDICGCEKQ (199 aa)). C86 (nucleophile) is an active-site residue. Active-site residues include H181 and E183. The region spanning 208-400 (WTPAKIIDDA…LGLPYNMLYR (193 aa)) is the GMPS ATP-PPase domain. 235–241 (SGGVDSS) contributes to the ATP binding site.

Homodimer.

The enzyme catalyses XMP + L-glutamine + ATP + H2O = GMP + L-glutamate + AMP + diphosphate + 2 H(+). It participates in purine metabolism; GMP biosynthesis; GMP from XMP (L-Gln route): step 1/1. In terms of biological role, catalyzes the synthesis of GMP from XMP. This Idiomarina loihiensis (strain ATCC BAA-735 / DSM 15497 / L2-TR) protein is GMP synthase [glutamine-hydrolyzing].